Here is a 251-residue protein sequence, read N- to C-terminus: tRNA (guanine-N(1)-)-methyltransferase (251 aa).

Residues Gly117 and 137–142 (IGDYVL) each bind S-adenosyl-L-methionine.

This sequence belongs to the RNA methyltransferase TrmD family. Homodimer.

The protein resides in the cytoplasm. It carries out the reaction guanosine(37) in tRNA + S-adenosyl-L-methionine = N(1)-methylguanosine(37) in tRNA + S-adenosyl-L-homocysteine + H(+). Its function is as follows. Specifically methylates guanosine-37 in various tRNAs. The protein is tRNA (guanine-N(1)-)-methyltransferase of Actinobacillus pleuropneumoniae serotype 5b (strain L20).